The following is a 249-amino-acid chain: Voltage-gated potassium channel subunit beta-3 (249 aa).

NADP(+) contacts are provided by Asn-44, Ser-74, Arg-75, Gln-100, Trp-129, Ser-130, Pro-131, Leu-132, Ala-133, Cys-134, Lys-140, Lys-150, Gly-209, Ser-211, Gln-215, and Glu-218.

This sequence belongs to the shaker potassium channel beta subunit family. As to quaternary structure, forms heteromultimeric complex with alpha subunits. Interacts with KCNA5 and KCNB2. As to expression, strong expression in brain, with highest levels in neocortical and allocortical regions, hippocampus, olfactory bulb and cerebellum. Also strong in kidney. Weak expression in lung, skeletal muscle and heart.

The protein resides in the cytoplasm. Functionally, regulatory subunit of the voltage-gated potassium (Kv) channels composed of pore-forming and potassium-conducting alpha subunits and of regulatory beta subunit. The beta-3/KCNAB3 subunit may mediate closure of potassium channels. Enhances the expression of Kv2.2/KCNB2 alpha subunit-containing Kv channels but not Kv2.1/KCNB1. May display nicotinamide adenine dinucleotide phosphate (NADPH)-dependent aldoketoreductase activity. The binding of oxidized and reduced NADP(H) cofactors may be required for the regulation of potassium channel activity. The polypeptide is Voltage-gated potassium channel subunit beta-3 (Mus musculus (Mouse)).